The chain runs to 333 residues: Nucleoid-associated protein APJL_0454 (333 aa).

This sequence belongs to the YejK family.

Its subcellular location is the cytoplasm. It is found in the nucleoid. The protein is Nucleoid-associated protein APJL_0454 of Actinobacillus pleuropneumoniae serotype 3 (strain JL03).